Consider the following 572-residue polypeptide: Dityrosine transporter 1 (572 aa).

2 disordered regions span residues 1 to 28 (MGSE…STFH) and 49 to 95 (RANI…SPDT). The Cytoplasmic segment spans residues 1–110 (MGSEPFQKKN…YTYFSKDQRL (110 aa)). Positions 13–28 (LQINSQESGTTRSTFH) are enriched in polar residues. Positions 50-62 (ANIDHDVFHEHPD) are enriched in basic and acidic residues. Positions 83–95 (SSNSQSRDPSPDT) are enriched in polar residues. The chain crosses the membrane as a helical span at residues 111–131 (IIFGIIIFIGFLGPMSGNIYI). The Extracellular segment spans residues 132–149 (PALPLLQREYDVSATTIN). The helical transmembrane segment at 150–170 (ATVSVFMAVFSVGPLFWGALA) threads the bilayer. At 171-184 (DFGGRKFLYMVSLS) the chain is on the cytoplasmic side. The helical transmembrane segment at 185 to 205 (LMLIVNILLAAVPVNIAALFV) threads the bilayer. The Extracellular portion of the chain corresponds to 206-207 (LR). Residues 208–228 (IFQAFASSSVISLGAGTVTDV) traverse the membrane as a helical segment. Residues 229 to 240 (VPPKHRGKAIAY) lie on the Cytoplasmic side of the membrane. Residues 241–261 (FMMGPNMGPIIAPIVAGLILM) form a helical membrane-spanning segment. Residues 262–267 (KGNYWR) are Extracellular-facing. The helical transmembrane segment at 268–288 (WLFGFTSIMTGIALILVTALL) threads the bilayer. Residues 289 to 366 (PETLRCIVGN…TLYWKMIKCP (78 aa)) lie on the Cytoplasmic side of the membrane. A helical membrane pass occupies residues 367-387 (PIIITSVSTALLFSSYYAFSV). At 388–398 (TFSYYLEHDYR) the chain is on the extracellular side. The chain crosses the membrane as a helical span at residues 399-419 (FTMLEIGAAYVCPGVAMLLGS). Over 420 to 446 (QSGGHLSDYLRSRWIKSHPKKKFPAEF) the chain is Cytoplasmic. The helical transmembrane segment at 447 to 469 (RLLLNLIGILLTICGTIGYGWAI) threads the bilayer. Residues 470-472 (FFH) are Extracellular-facing. The chain crosses the membrane as a helical span at residues 473-493 (YHFVVLLVFSALTAFGMTWCS). The Cytoplasmic segment spans residues 494-520 (NTSMTYLTELFPKRAAGTVAVSSFFRN). The helical transmembrane segment at 521–541 (VGAAISSAIILQLCNAMGIGW) threads the bilayer. Position 542 (Cys542) is a topological domain, extracellular. The chain crosses the membrane as a helical span at residues 543-563 (FTGLGLCSSISLIGILYLLIF). A required for the localization to the prospore membrane region spans residues 548–572 (LCSSISLIGILYLLIFQRKYTAKEF). Residues 564 to 572 (QRKYTAKEF) lie on the Cytoplasmic side of the membrane.

This sequence belongs to the major facilitator superfamily. CAR1 family. Phosphorylated.

The protein localises to the prospore membrane. Its function is as follows. Prospore-specific dityrosine transporter responsible for translocation of dityrosine through the prospore membrane and required for the formation of the outermost layer of the spore. The sequence is that of Dityrosine transporter 1 (DTR1) from Saccharomyces cerevisiae (strain ATCC 204508 / S288c) (Baker's yeast).